A 207-amino-acid chain; its full sequence is MATIFDILNTLNNNNFENCKRQCSTNKSNKTIIDILPPMDVTMTNDKLIIETELAGISKDQIEIDIKDSILTIQGEKKKNLNKQQQQLVIEKSSTSPSSSTLDSKENGPSIEEFEDDIKPKSTTSTTTVSTATTTKENKEDENKTKSSDKKFISERSFGNFKRYLDLTKVLYQLDLNSINTQFENGLLTITINKKLHYSNTIKININ.

Residues 30–207 (KTIIDILPPM…YSNTIKININ (178 aa)) form the sHSP domain. Low complexity-rich tracts occupy residues 84 to 101 (QQQQ…SSST) and 122 to 135 (STTS…ATTT). Residues 84–149 (QQQQLVIEKS…EDENKTKSSD (66 aa)) form a disordered region. The segment covering 136–149 (KENKEDENKTKSSD) has biased composition (basic and acidic residues).

The protein belongs to the small heat shock protein (HSP20) family.

In Dictyostelium discoideum (Social amoeba), this protein is Small heat shock protein hspG7 (hspG7).